A 1143-amino-acid polypeptide reads, in one-letter code: cGMP-specific 3',5'-cyclic phosphodiesterase (1143 aa).

2 stretches are compositionally biased toward low complexity: residues 1–19 and 31–45; these read MHGPVSRSSSSSNMTDVSS and TTSSSSAATTSASSS. A disordered region spans residues 1-167; the sequence is MHGPVSRSSS…KASTTASQQD (167 aa). A compositionally biased stretch (polar residues) spans 46-59; that stretch reads KPLTNGANKTTIST. The segment covering 75-84 has biased composition (low complexity); the sequence is GAIPASSSSG. Positions 96-107 are enriched in polar residues; sequence SNNNRPAATNRS. A compositionally biased stretch (low complexity) spans 131–153; sequence SSSSPSQSPSQTQASIQTQTSQQ. 2 consecutive GAF domains span residues 272–424 and 456–637; these read DIDV…GIGI and NLEC…GLGI. The region spanning 667–990 is the PDEase domain; sequence SQDQTEKLTQ…RNWQDLAEKV (324 aa). His743 (proton donor) is an active-site residue. Residues His747, His783, Asp784, and Asp894 each contribute to the a divalent metal cation site. Disordered stretches follow at residues 1031 to 1060 and 1090 to 1143; these read QQSQHGSEDSHTPEHQRSGSRLSMKKTGAL and SHVS…CALL. Basic and acidic residues-rich tracts occupy residues 1036–1047 and 1090–1100; these read GSEDSHTPEHQR and SHVSEDMDDKS. The span at 1109-1127 shows a compositional bias: low complexity; it reads ASGSMGRMSASSSTSSTGG. Positions 1133–1143 are enriched in basic residues; it reads SKKRSKLCALL. Residue Cys1140 is modified to Cysteine methyl ester. Residue Cys1140 is the site of S-farnesyl cysteine attachment. Positions 1141–1143 are cleaved as a propeptide — removed in mature form; the sequence is ALL.

Belongs to the cyclic nucleotide phosphodiesterase family. In terms of assembly, interacts with PrBP. The cofactor is a divalent metal cation.

The protein localises to the cell membrane. The catalysed reaction is 3',5'-cyclic GMP + H2O = GMP + H(+). Functionally, has a role regulating cGMP transport in Malpighian tubule principal cells. This chain is cGMP-specific 3',5'-cyclic phosphodiesterase, found in Drosophila simulans (Fruit fly).